The chain runs to 321 residues: MKVAALFLCGLALATASPSWDHFKTQYGRKYGDAKEELYRQRVFQQNEQLIEDFNKKFENGEVTFKVAMNQFGDMTNEEFNAVMKGYKKGSRGEPKAVFTAEAGPMAADVDWRTKALVTPVKDQEQCGSCWAFSATGALEGQHFLKNDELVSLSEQQLVDCSTDYGNDGCGGGWMTSAFDYIKDNGGIDTESSYPYEAEDRSCRFDANSIGAICTGSVEVQHTEEALQEAVSGVGPISVAIDASHFSFQFYSSGVYYEQNCSPTFLDHGVLAVGYGTESTKDYWLVKNSWGSSWGDAGYIKMSRNRDNNCGIASEPSYPTV.

Positions 1–16 (MKVAALFLCGLALATA) are cleaved as a signal peptide. The propeptide at 17 to 106 (SPSWDHFKTQ…AVFTAEAGPM (90 aa)) is activation peptide. Cystine bridges form between Cys-127–Cys-170, Cys-161–Cys-203, and Cys-261–Cys-310. Cys-130 is a catalytic residue. Residues His-268 and Asn-288 contribute to the active site.

The protein belongs to the peptidase C1 family.

Its activity is regulated as follows. Inhibited by E-64, antipain, leupeptin, heavy metal ions, iodoacetic acid, dithionitrobenzene, p-hydroxymercuri-benzoate; activated by mercaptoethanol and dithiothreitol. This is Digestive cysteine proteinase 3 (LCP3) from Homarus americanus (American lobster).